The primary structure comprises 435 residues: Tol-Pal system protein TolB (435 aa).

The first 28 residues, 1–28, serve as a signal peptide directing secretion; the sequence is MTKCSFFRAILVAVGLMTAAVFATPANA. Residues 288–310 form a disordered region; sequence STAAIDTSPSYSPDGARVSFESD.

Belongs to the TolB family. As to quaternary structure, the Tol-Pal system is composed of five core proteins: the inner membrane proteins TolA, TolQ and TolR, the periplasmic protein TolB and the outer membrane protein Pal. They form a network linking the inner and outer membranes and the peptidoglycan layer.

It is found in the periplasm. Part of the Tol-Pal system, which plays a role in outer membrane invagination during cell division and is important for maintaining outer membrane integrity. The polypeptide is Tol-Pal system protein TolB (Rhizobium johnstonii (strain DSM 114642 / LMG 32736 / 3841) (Rhizobium leguminosarum bv. viciae)).